A 952-amino-acid chain; its full sequence is Substrate-adhesion molecule (952 aa).

The N-terminal stretch at 1-25 (MKSQKIGSMILLIGILLAIFNFAYS) is a signal peptide. Residues 26 to 527 (DDDIERFSIN…TWFFDTNVET (502 aa)) are Extracellular-facing. Asn-78, Asn-182, Asn-231, Asn-243, and Asn-412 each carry an N-linked (GlcNAc...) asparagine glycan. Residues 438–471 (EIRRCKDSCNGYGTCNTANYTCVCDSAHMGETCN) enclose the EGF-like domain. 3 disulfides stabilise this stretch: Cys-442-Cys-452, Cys-446-Cys-459, and Cys-461-Cys-470. N-linked (GlcNAc...) asparagine glycosylation is present at Asn-456. The helical transmembrane segment at 528–548 (GVIALACIFIAFVGILYIIDI) threads the bilayer. The Cytoplasmic portion of the chain corresponds to 549–591 (GTTVPIDIKRAKDYAEENKSGQFPKATHEEASVLWWRDQRSHK). Residues 592 to 612 (AWTFMDQFQLISLVSHIGVVF) traverse the membrane as a helical segment. The Extracellular segment spans residues 613–678 (PSRFISFTEY…GDLYLLPNIL (66 aa)). A helical transmembrane segment spans residues 679 to 699 (FWFGLLLGVFLVPLLLAYAII). Topologically, residues 700-722 (SFMESLIHWKEVVTNRLIHVLVR) are cytoplasmic. A helical membrane pass occupies residues 723-743 (ILTFGYIGVLIAASFAMVTPL). Topologically, residues 744–752 (HDYRIIIPG) are extracellular. A helical membrane pass occupies residues 753–773 (AIIFVLYGIGLPIAIWFLLAV). Topologically, residues 774–801 (PEARLHNPTFKQRFGCLYVHYKPKTDHR) are cytoplasmic. The chain crosses the membrane as a helical span at residues 802-822 (FVVFMFIKRFIMAVIIGILSF). The Extracellular portion of the chain corresponds to 823-837 (KPMTNYPLTGTDLAV). The chain crosses the membrane as a helical span at residues 838-858 (PIVQVVVIDIALIGYAVLLFI). Over 859-868 (RKPYFDHYQL) the chain is Cytoplasmic. A helical transmembrane segment spans residues 869–889 (WLEYLLTAINIVTVSLSLTHI). Topologically, residues 890–897 (KSPSAAGE) are extracellular. A helical membrane pass occupies residues 898 to 918 (LIACLIQALALVACIAAYVVA). Over 919 to 952 (WLQMRSSFIKKVKKYLCCCCKSSKSSGEIDLSKK) the chain is Cytoplasmic.

Its subcellular location is the cell membrane. Its function is as follows. Involved in substrate adhesion, myosin-independent cytokinesis, organization of actin cytoskeleton, and phagocytosis. In Dictyostelium discoideum (Social amoeba), this protein is Substrate-adhesion molecule (sadA).